Consider the following 924-residue polypeptide: Intercellular adhesion molecule 5 (924 aa).

A signal peptide spans 1-31 (MPGPSPGLRRALLGLWAALGLGLFGLSAVSQ). Over 32-835 (EPFWADLQPR…RITVRVAGPW (804 aa)) the chain is Extracellular. 9 consecutive Ig-like C2-type domains span residues 48 to 130 (GGSL…PLPP), 135 to 235 (GENF…RLAA), 242 to 329 (GSER…LLTL), 337 to 402 (GQMV…SAEL), 408 to 486 (PRLD…VTLT), 491 to 568 (PALD…VAVT), 573 to 662 (PRFE…VVSA), 666 to 739 (PEMD…RTVT), and 746 to 830 (PVVA…ITVR). A glycan (N-linked (GlcNAc...) (high mannose) asparagine) is linked at Asn-54. 2 disulfide bridges follow: Cys-55–Cys-99 and Cys-59–Cys-103. 2 N-linked (GlcNAc...) asparagine glycosylation sites follow: Asn-74 and Asn-137. A disulfide bond links Cys-142 and Cys-198. 2 positions are modified to phosphothreonine: Thr-182 and Thr-184. 2 N-linked (GlcNAc...) asparagine glycosylation sites follow: Asn-195 and Asn-214. Cys-249 and Cys-302 are disulfide-bonded. N-linked (GlcNAc...) asparagine glycans are attached at residues Asn-303, Asn-316, Asn-371, and Asn-397. Cys-344 and Cys-383 form a disulfide bridge. Cystine bridges form between Cys-415-Cys-470, Cys-498-Cys-552, and Cys-580-Cys-645. Residues Asn-583 and Asn-646 are each glycosylated (N-linked (GlcNAc...) asparagine). A disulfide bridge connects residues Cys-673 and Cys-725. N-linked (GlcNAc...) asparagine glycans are attached at residues Asn-764, Asn-795, and Asn-796. Cys-769 and Cys-814 are joined by a disulfide. The helical transmembrane segment at 836–856 (LWVAVGGAAGGAALLAAGAGL) threads the bilayer. The Cytoplasmic segment spans residues 857–924 (AFYVQSTACK…EVFAIQLTSA (68 aa)). A compositionally biased stretch (gly residues) spans 891–903 (AGGAAGAEGGPEA). A disordered region spans residues 891 to 911 (AGGAAGAEGGPEAAGGAAESP).

This sequence belongs to the immunoglobulin superfamily. ICAM family. Post-translationally, glycosylation at Asn-54 is critical for functional folding. In terms of tissue distribution, expressed on neurons in the most rostral segment of the mammalian brain, the telencephalon.

It localises to the membrane. Its function is as follows. ICAM proteins are ligands for the leukocyte adhesion protein LFA-1 (integrin alpha-L/beta-2). In Homo sapiens (Human), this protein is Intercellular adhesion molecule 5 (ICAM5).